Reading from the N-terminus, the 337-residue chain is DNA-directed RNA polymerase subunit alpha (337 aa).

Residues 1 to 233 (MVREKVRVST…DLFIPFLHAE (233 aa)) form an alpha N-terminal domain (alpha-NTD) region. The interval 267–337 (IALKSIFIDQ…KAFHNPFTEE (71 aa)) is alpha C-terminal domain (alpha-CTD).

The protein belongs to the RNA polymerase alpha chain family. In plastids the minimal PEP RNA polymerase catalytic core is composed of four subunits: alpha, beta, beta', and beta''. When a (nuclear-encoded) sigma factor is associated with the core the holoenzyme is formed, which can initiate transcription.

Its subcellular location is the plastid. The protein localises to the chloroplast. It carries out the reaction RNA(n) + a ribonucleoside 5'-triphosphate = RNA(n+1) + diphosphate. DNA-dependent RNA polymerase catalyzes the transcription of DNA into RNA using the four ribonucleoside triphosphates as substrates. The chain is DNA-directed RNA polymerase subunit alpha from Eucalyptus globulus subsp. globulus (Tasmanian blue gum).